The chain runs to 181 residues: Oligoribonuclease (181 aa).

The 164-residue stretch at 8–171 folds into the Exonuclease domain; it reads LIWVDLEMTG…DDIHDSIAEL (164 aa). Residue Tyr-129 is part of the active site.

This sequence belongs to the oligoribonuclease family.

It is found in the cytoplasm. Its function is as follows. 3'-to-5' exoribonuclease specific for small oligoribonucleotides. The polypeptide is Oligoribonuclease (Photobacterium profundum (strain SS9)).